Consider the following 132-residue polypeptide: Large-conductance mechanosensitive channel (132 aa).

The next 2 helical transmembrane spans lie at phenylalanine 10 to glycine 30 and glycine 76 to isoleucine 96.

Belongs to the MscL family. In terms of assembly, homopentamer.

It localises to the cell inner membrane. In terms of biological role, channel that opens in response to stretch forces in the membrane lipid bilayer. May participate in the regulation of osmotic pressure changes within the cell. The protein is Large-conductance mechanosensitive channel of Campylobacter hominis (strain ATCC BAA-381 / DSM 21671 / CCUG 45161 / LMG 19568 / NCTC 13146 / CH001A).